The following is a 381-amino-acid chain: Anti-sigma-I factor RsgI (381 aa).

Over 1 to 63 (MRRGIIVEKN…FDFFKLRPFK (63 aa)) the chain is Cytoplasmic. The region spanning 2 to 50 (RRGIIVEKNKKFVTLLTPDGQFLKAKNDRHSYEIGEEIMLPSETRMGRR) is the RsgI N-terminal anti-sigma domain. Residues 64 to 84 (MGIFTMTAIMLFIFIVLPVFS) traverse the membrane as a helical segment. The Extracellular portion of the chain corresponds to 85–381 (NNKAYAYMTI…NEDSPSAPGE (297 aa)). Residues 198 to 381 (SDMQTREKAK…NEDSPSAPGE (184 aa)) are disordered. Composition is skewed to basic and acidic residues over residues 200-210 (MQTREKAKKEG), 219-244 (SNEK…QKSD), 273-321 (GDQK…DKGN), and 349-359 (SRRDNASDRRN).

In terms of assembly, interacts (via RsgI N-terminal anti-sigma domain) with SigI.

It localises to the cell membrane. Its function is as follows. Anti-sigma factor for SigI. Negatively regulates SigI activity through direct interaction. The chain is Anti-sigma-I factor RsgI from Bacillus subtilis (strain 168).